Here is a 741-residue protein sequence, read N- to C-terminus: Polyribonucleotide nucleotidyltransferase (741 aa).

Mg(2+)-binding residues include aspartate 489 and aspartate 495. A KH domain is found at 556-615; sequence PKIDSIQIPVDKIKVVIGKGGETIDKIIAETGVTIDIDEEGLVQIFSSDQDAIDRAKTII. The 69-residue stretch at 625-693 folds into the S1 motif domain; it reads GEVYTVPVVR…EKGRVDASIK (69 aa). The disordered stretch occupies residues 696–741; the sequence is LPKPEKNEDGENGEEHRHCCCSHHKPDHHSESMEAPKKSDESETKE. Composition is skewed to basic and acidic residues over residues 698–713 and 723–741; these read KPEK…EHRH and HHSE…ETKE.

It belongs to the polyribonucleotide nucleotidyltransferase family. Mg(2+) is required as a cofactor.

The protein localises to the cytoplasm. It catalyses the reaction RNA(n+1) + phosphate = RNA(n) + a ribonucleoside 5'-diphosphate. Its function is as follows. Involved in mRNA degradation. Catalyzes the phosphorolysis of single-stranded polyribonucleotides processively in the 3'- to 5'-direction. This is Polyribonucleotide nucleotidyltransferase from Streptococcus thermophilus (strain ATCC BAA-491 / LMD-9).